We begin with the raw amino-acid sequence, 513 residues long: MGPTKYIIIAVVIIIICVILGLYIVDKKAKEKLSEASKEARRLKEEAERDAEAKKKEAILEAKEEAHKLRAEVERENRERRNEVQRLERRIIQKEEALDKKSEALENKEEALNKKQQKIEDVETHMEELHEKQRTELERISGLTTEQAKEFLLEQVRKEVKHETAVMIKEIETKAKEEADKRAREVITYAIQRCAADHVAETTVHVVNLPNDEMKGRIIGREGRNIRTLETLTGVDLIIDDTPEAVILSGFDPIRREVARIALEKLIVDGRIHPARIEEMVEKAKKEVEISIKEEGEQATFETGIHGLHIELIRLLGRLKYRTSYGQNVLKHSIEVSHLAGLMASELGIDPTLAKRVGLLHDIGKAVDHEVEGPHAIIGSEIAKKYRESALVVNAIGAHHGDMEPQSLEAILVQAADAISAARPGARRETLEAYIKRLEKLEEIANECEGVEKSYAIQAGREIRIMVKPEVLDDTGCIEMARNIVKQIESELEYPGQIKVNVIRETRAIEYAK.

Residues 6 to 26 (YIIIAVVIIIICVILGLYIVD) traverse the membrane as a helical segment. The 86-residue stretch at 203–288 (TVHVVNLPND…EMVEKAKKEV (86 aa)) folds into the KH domain. The 94-residue stretch at 329-422 (VLKHSIEVSH…VQAADAISAA (94 aa)) folds into the HD domain.

The protein belongs to the RNase Y family.

The protein localises to the cell membrane. Endoribonuclease that initiates mRNA decay. This chain is Ribonuclease Y, found in Clostridium botulinum (strain ATCC 19397 / Type A).